We begin with the raw amino-acid sequence, 155 residues long: Cyanate hydratase (155 aa).

Catalysis depends on residues Arg95, Glu98, and Ser121.

It belongs to the cyanase family.

It carries out the reaction cyanate + hydrogencarbonate + 3 H(+) = NH4(+) + 2 CO2. Catalyzes the reaction of cyanate with bicarbonate to produce ammonia and carbon dioxide. This is Cyanate hydratase from Pseudomonas savastanoi pv. phaseolicola (strain 1448A / Race 6) (Pseudomonas syringae pv. phaseolicola (strain 1448A / Race 6)).